The sequence spans 480 residues: Argininosuccinate lyase (480 aa).

A compositionally biased stretch (polar residues) spans 1–17; it reads MTDTTPSADLGASSQQP. A disordered region spans residues 1–24; sequence MTDTTPSADLGASSQQPAKAWSGR.

It belongs to the lyase 1 family. Argininosuccinate lyase subfamily.

It localises to the cytoplasm. The catalysed reaction is 2-(N(omega)-L-arginino)succinate = fumarate + L-arginine. It participates in amino-acid biosynthesis; L-arginine biosynthesis; L-arginine from L-ornithine and carbamoyl phosphate: step 3/3. In Azoarcus sp. (strain BH72), this protein is Argininosuccinate lyase.